The sequence spans 157 residues: Protein Smg (157 aa).

Belongs to the Smg family.

This Yersinia pseudotuberculosis serotype O:1b (strain IP 31758) protein is Protein Smg.